We begin with the raw amino-acid sequence, 141 residues long: Hemoglobin subunit alpha-1/2 (141 aa).

Residues 1–141 (VLSPADKKNV…VSTVLTSKYR (141 aa)) enclose the Globin domain. A Phosphoserine modification is found at Ser-3. N6-succinyllysine is present on residues Lys-7 and Lys-11. Lys-16 is subject to N6-acetyllysine; alternate. Lys-16 carries the N6-succinyllysine; alternate modification. Tyr-24 carries the post-translational modification Phosphotyrosine. Ser-35 is subject to Phosphoserine. Lys-40 is subject to N6-succinyllysine. Ser-49 is subject to Phosphoserine. Residue His-58 coordinates O2. His-87 is a binding site for heme b. The residue at position 102 (Ser-102) is a Phosphoserine. The residue at position 108 (Thr-108) is a Phosphothreonine. Residues Ser-124 and Ser-131 each carry the phosphoserine modification. Phosphothreonine is present on residues Thr-134 and Thr-137. Ser-138 carries the phosphoserine modification.

This sequence belongs to the globin family. As to quaternary structure, heterotetramer of two alpha chains and two beta chains. Red blood cells.

Involved in oxygen transport from the lung to the various peripheral tissues. This chain is Hemoglobin subunit alpha-1/2, found in Mandrillus sphinx (Mandrill).